Consider the following 397-residue polypeptide: MTATDPVANLQTLIRCPSVTPAEGGALSALDAMLAPLGFTVDKVKASEAGTADIENLYARLGKDGPHLMFAGHTDVVPVGDEADWTHPPFAAEISKGELFGRGAVDMKGGIACFIAAVARHIEKNGPPKGSISFLITGDEEGPAINGTIKLLRWAAERGERWDACLVGEPTNPDRLGDMIKIGRRGSLSGKITVHGVQGHAAYPHLADNPVRGMLQLTQALMDPPFDGGTDDFQPSNLEVTTVDVGNPATNVIPAKASASFNIRFNDSWTAETLRAEILRRLDAAAGDGRLRPGREPVKYDIVWADRPSHVFLTRNNALIASLSSAVEGVIGRSPKLSTTGGTSDARFIKDYCPVVEFGLVGQTMHMVDERVAVSDLETLTAIYETFIAHWFANAGA.

Residue H73 coordinates Zn(2+). The active site involves D75. D106 serves as a coordination point for Zn(2+). E140 serves as the catalytic Proton acceptor. The Zn(2+) site is built by E141, E169, and H366.

This sequence belongs to the peptidase M20A family. DapE subfamily. In terms of assembly, homodimer. The cofactor is Zn(2+). Requires Co(2+) as cofactor.

The catalysed reaction is N-succinyl-(2S,6S)-2,6-diaminopimelate + H2O = (2S,6S)-2,6-diaminopimelate + succinate. Its pathway is amino-acid biosynthesis; L-lysine biosynthesis via DAP pathway; LL-2,6-diaminopimelate from (S)-tetrahydrodipicolinate (succinylase route): step 3/3. Functionally, catalyzes the hydrolysis of N-succinyl-L,L-diaminopimelic acid (SDAP), forming succinate and LL-2,6-diaminopimelate (DAP), an intermediate involved in the bacterial biosynthesis of lysine and meso-diaminopimelic acid, an essential component of bacterial cell walls. This Rhizobium leguminosarum bv. trifolii (strain WSM2304) protein is Succinyl-diaminopimelate desuccinylase.